A 296-amino-acid chain; its full sequence is Fructose-bisphosphate aldolase class 1 (296 aa).

Catalysis depends on Glu175, which acts as the Proton acceptor. Lys212 serves as the catalytic Schiff-base intermediate with dihydroxyacetone-P.

Belongs to the class I fructose-bisphosphate aldolase family.

It catalyses the reaction beta-D-fructose 1,6-bisphosphate = D-glyceraldehyde 3-phosphate + dihydroxyacetone phosphate. The protein operates within carbohydrate degradation; glycolysis; D-glyceraldehyde 3-phosphate and glycerone phosphate from D-glucose: step 4/4. The polypeptide is Fructose-bisphosphate aldolase class 1 (Staphylococcus epidermidis (strain ATCC 35984 / DSM 28319 / BCRC 17069 / CCUG 31568 / BM 3577 / RP62A)).